Consider the following 324-residue polypeptide: Beta-ketoacyl-[acyl-carrier-protein] synthase III (324 aa).

Active-site residues include C112 and H249. The interval 250–254 (QANDR) is ACP-binding. N279 is an active-site residue.

The protein belongs to the thiolase-like superfamily. FabH family. As to quaternary structure, homodimer.

It localises to the cytoplasm. It catalyses the reaction malonyl-[ACP] + acetyl-CoA + H(+) = 3-oxobutanoyl-[ACP] + CO2 + CoA. Its pathway is lipid metabolism; fatty acid biosynthesis. Its function is as follows. Catalyzes the condensation reaction of fatty acid synthesis by the addition to an acyl acceptor of two carbons from malonyl-ACP. Catalyzes the first condensation reaction which initiates fatty acid synthesis and may therefore play a role in governing the total rate of fatty acid production. Possesses both acetoacetyl-ACP synthase and acetyl transacylase activities. Its substrate specificity determines the biosynthesis of branched-chain and/or straight-chain of fatty acids. In Streptococcus pneumoniae serotype 19F (strain G54), this protein is Beta-ketoacyl-[acyl-carrier-protein] synthase III.